Here is a 657-residue protein sequence, read N- to C-terminus: Serine/threonine-protein kinase BUR1 (657 aa).

The 307-residue stretch at 60–366 folds into the Protein kinase domain; sequence YREDEKLGQG…AMSAKHHPWF (307 aa). ATP is bound by residues 66-74 and Lys-89; that span reads LGQGTFGEV. Residue Asp-195 is the Proton acceptor of the active site. Thr-240 is modified (phosphothreonine; by CAK). Ser-400 is modified (phosphoserine). Phosphothreonine is present on Thr-405. Positions 414–657 are disordered; it reads KGESPVVKNL…FQNSDIADLY (244 aa). At Ser-417 the chain carries Phosphoserine. A compositionally biased stretch (low complexity) spans 489–501; sequence NNSSRNNRFSGNS. Composition is skewed to polar residues over residues 535–552, 564–595, and 614–625; these read SRYQ…SPND, PETN…NGSR, and ISPSQGQHQLTS. Positions 627–649 are enriched in basic and acidic residues; the sequence is PIEKKNGSFKDERAKPDESKEFQ. Ser-634 bears the Phosphoserine mark.

The protein belongs to the protein kinase superfamily. CMGC Ser/Thr protein kinase family. CDC2/CDKX subfamily. As to quaternary structure, belongs to the BUR kinase complex composed of SGV1/BUR1 and BUR2. Interacts with BUR2 and RBP1.

Its subcellular location is the nucleus. The catalysed reaction is L-seryl-[protein] + ATP = O-phospho-L-seryl-[protein] + ADP + H(+). It carries out the reaction L-threonyl-[protein] + ATP = O-phospho-L-threonyl-[protein] + ADP + H(+). It catalyses the reaction [DNA-directed RNA polymerase] + ATP = phospho-[DNA-directed RNA polymerase] + ADP + H(+). Its function is as follows. Serine/threonine-protein kinase component of the BUR kinase complex involved in transcription regulation. This complex phosphorylates 'Ser-120' of the UBC2/RAD6 ubiquitin-conjugating enzyme (E2), leading to monoubiquitination of histone H2B, the localization of the PAF1 complex to the chromatin, and the silencing of telomeric-associated genes. Also required for histone H3 'Lys-4' trimethylation. May phosphorylate the 'Ser-5' of the RBP1 carboxy-terminal domain (CTD) repeats. Necessary for the recovery from pheromone-induced growth arrest in the cell cycle G1 phase. The kinase activity of the complex requires the presence of BUR2. This Saccharomyces cerevisiae (strain ATCC 204508 / S288c) (Baker's yeast) protein is Serine/threonine-protein kinase BUR1 (SGV1).